The following is a 463-amino-acid chain: Sialic acid-binding Ig-like lectin 9 (463 aa).

Residues 1-17 (MLLLLLPLLWGRERAEG) form the signal peptide. The Extracellular portion of the chain corresponds to 18–348 (QTSKLLTMQS…SKATSGVTQG (331 aa)). Residues 20 to 140 (SKLLTMQSSV…KHHRLSVNVT (121 aa)) form the Ig-like V-type domain. 3 disulfide bridges follow: Cys36-Cys170, Cys41-Cys102, and Cys164-Cys213. Asn101 carries N-linked (GlcNAc...) asparagine glycosylation. N-acetylneuraminate is bound at residue Arg120. Asn138 and Asn161 each carry an N-linked (GlcNAc...) asparagine glycan. In terms of domain architecture, Ig-like C2-type 1 spans 146 to 229 (PNILIPGTLE…ASVTTNKTVH (84 aa)). Asn225, Asn231, Asn238, and Asn256 each carry an N-linked (GlcNAc...) asparagine glycan. The Ig-like C2-type 2 domain occupies 236 to 336 (PQNLTMTVFQ…GSQQVYLNVS (101 aa)). A disulfide bridge links Cys272 with Cys320. N-linked (GlcNAc...) asparagine glycosylation occurs at Asn334. Residues 349-369 (VVGGAGATALVFLSFCVIFVV) traverse the membrane as a helical segment. Residues 370-463 (VRSCRKKSAR…TEYSEIKIHR (94 aa)) lie on the Cytoplasmic side of the membrane. The interval 380–428 (PAAGVGDTGIEDANAVRGSASQGPLTEPWAEDSPPDQPPPASARSSVGE) is disordered. An ITIM motif motif is present at residues 431–436 (LQYASL). Residues 444–463 (WDSRGQEATDTEYSEIKIHR) form a disordered region. The SLAM-like motif motif lies at 454-459 (TEYSEI).

Belongs to the immunoglobulin superfamily. SIGLEC (sialic acid binding Ig-like lectin) family. As to expression, expressed by peripheral blood leukocytes (neutrophils and monocytes but not eosinophils). Found in liver, fetal liver, bone marrow, placenta, spleen and in lower levels in skeletal muscle, fetal brain, stomach, lung, thymus, prostate, brain, mammary, adrenal gland, colon, trachea, cerebellum, testis, small intestine and spinal cordon.

It localises to the membrane. In terms of biological role, putative adhesion molecule that mediates sialic-acid dependent binding to cells. Preferentially binds to alpha-2,3- or alpha-2,6-linked sialic acid. The sialic acid recognition site may be masked by cis interactions with sialic acids on the same cell surface. The chain is Sialic acid-binding Ig-like lectin 9 (SIGLEC9) from Homo sapiens (Human).